Consider the following 250-residue polypeptide: 3-deoxy-manno-octulosonate cytidylyltransferase (250 aa).

It belongs to the KdsB family.

The protein resides in the cytoplasm. It catalyses the reaction 3-deoxy-alpha-D-manno-oct-2-ulosonate + CTP = CMP-3-deoxy-beta-D-manno-octulosonate + diphosphate. The protein operates within nucleotide-sugar biosynthesis; CMP-3-deoxy-D-manno-octulosonate biosynthesis; CMP-3-deoxy-D-manno-octulosonate from 3-deoxy-D-manno-octulosonate and CTP: step 1/1. Its pathway is bacterial outer membrane biogenesis; lipopolysaccharide biosynthesis. Functionally, activates KDO (a required 8-carbon sugar) for incorporation into bacterial lipopolysaccharide in Gram-negative bacteria. The protein is 3-deoxy-manno-octulosonate cytidylyltransferase of Francisella tularensis subsp. tularensis (strain FSC 198).